Consider the following 719-residue polypeptide: MKEQDNLSISQELYGTILINLKSIVQNIFPLEYNKQEITISYIVEQIASSGSIQKNSDYPELDEEIEEINQAIIDYCKYKEIPKEEENNIYKKTSELIKDGFLKNIEQTTKLEPTTELEKKYLDKLNQATSSDEKKIIIDQHKLEIEAFNKQIAQDFQKKQEDLRGNREITNVEEHKLVKEGIVTKEEIEPYLSNYPLLNTLVEYIYLDDDQDIPLVKKLFEIARNFYPNNSTQELKELMELSYKKVNDLVGTNSSNILELLNHKQISFADINNVESEELHKINEIKIKSNFKILDCVISGDCRVTLKKLIETGKIESFDKKELELVVALFEKDADTLNKHQETKLSSKVGKLLLTFHASKAYKLDDLMQFINIIDVAEELLFTATYYQNINIIKQIIETKIEISSSTLIKALYINFTSDNKEILDYLLSFKGLNINEHDENGGTLLDYAITFNKLDIVKKLLSHENIEVNKKNIYGFTILEQAINDDKLEIVKLLLSCKSLEINQKNQYQTTPLQQAINGDKLEIVKLLLSHPDIKFNEKDQLGYTSLDWVIICNKLEIFKVLMPHLDINQKNQDGYTPLEWSIYNSYEVFQTLLLRPDINVNEENQHGLTPLQLAIIDHNDQMIQALLSHKNIEVSEKNQYGTPLELVINNSNDTALKLLLSHPKINLNKTEIAEILRLHEAKLKEEVQDDSVPISNIELDTSVLGGLEEDQESYGL.

ANK repeat units lie at residues 377–406 (VAEE…EISS), 408–438 (TLIK…NINE), 442–472 (NGGT…EVNK), 476–506 (YGFT…EINQ), 510–540 (YQTT…KFNE), 544–572 (LGYT…DINQ), 576–605 (DGYT…NVNE), 609–639 (HGLT…EVSE), and 642–672 (QYGT…NLNK).

The sequence is that of Putative ankyrin repeat protein RBE_0319 from Rickettsia bellii (strain RML369-C).